The chain runs to 182 residues: Large ribosomal subunit protein uL6 (182 aa).

It belongs to the universal ribosomal protein uL6 family. Part of the 50S ribosomal subunit.

In terms of biological role, this protein binds to the 23S rRNA, and is important in its secondary structure. It is located near the subunit interface in the base of the L7/L12 stalk, and near the tRNA binding site of the peptidyltransferase center. The chain is Large ribosomal subunit protein uL6 from Trichormus variabilis (strain ATCC 29413 / PCC 7937) (Anabaena variabilis).